The sequence spans 198 residues: Recombination protein RecR (198 aa).

The segment at 57–72 (CSVCGHITDQDPCYIC) adopts a C4-type zinc-finger fold. In terms of domain architecture, Toprim spans 80 to 175 (SVICVVQDPK…KLSRIAHGLP (96 aa)).

It belongs to the RecR family.

Functionally, may play a role in DNA repair. It seems to be involved in an RecBC-independent recombinational process of DNA repair. It may act with RecF and RecO. The chain is Recombination protein RecR from Bacillus licheniformis (strain ATCC 14580 / DSM 13 / JCM 2505 / CCUG 7422 / NBRC 12200 / NCIMB 9375 / NCTC 10341 / NRRL NRS-1264 / Gibson 46).